The sequence spans 112 residues: Ciliary microtubule inner protein 3 (112 aa).

The segment at 1 to 34 (MCKDSQKPSVPSHGPKTPSCKGVKAPHSSRPRAW) is disordered.

It belongs to the CIMIP3-like family.

It is found in the cytoplasm. The protein resides in the cytoskeleton. It localises to the flagellum axoneme. The polypeptide is Ciliary microtubule inner protein 3 (Homo sapiens (Human)).